The primary structure comprises 432 residues: UDP-N-acetylglucosamine 1-carboxyvinyltransferase (432 aa).

22–23 (KN) contributes to the phosphoenolpyruvate binding site. Residue Arg96 participates in UDP-N-acetyl-alpha-D-glucosamine binding. Cys120 (proton donor) is an active-site residue. 2-(S-cysteinyl)pyruvic acid O-phosphothioketal is present on Cys120. Residues 125–129 (RPVDL), Asp310, and Ile332 contribute to the UDP-N-acetyl-alpha-D-glucosamine site.

The protein belongs to the EPSP synthase family. MurA subfamily.

It is found in the cytoplasm. It catalyses the reaction phosphoenolpyruvate + UDP-N-acetyl-alpha-D-glucosamine = UDP-N-acetyl-3-O-(1-carboxyvinyl)-alpha-D-glucosamine + phosphate. It functions in the pathway cell wall biogenesis; peptidoglycan biosynthesis. Cell wall formation. Adds enolpyruvyl to UDP-N-acetylglucosamine. The protein is UDP-N-acetylglucosamine 1-carboxyvinyltransferase of Caulobacter sp. (strain K31).